The primary structure comprises 154 residues: Protein X (154 aa).

The segment at 68-117 is mitochondrial targeting sequence; it reads PCALRFTSARCMETTVNAPRNLPKVLHKRTLGLSTMSTTGIETYFKDCVF.

This sequence belongs to the orthohepadnavirus protein X family. As to quaternary structure, may form homodimer. May interact with host CEBPA, CFLAR, CREB1, DDB1, E4F1, HBXIP, HSPD1/HSP60, NFKBIA, POLR2E and SMAD4. Interacts with host SMC5-SMC6 complex and induces its degradation. Interacts with host TRPC4AP; leading to prevent ubiquitination of TRPC4AP. Interacts with host PLSCR1; this interaction promotes ubiquitination and degradation of HBx and impairs HBx-mediated cell proliferation. Post-translationally, a fraction may be phosphorylated in insect cells and HepG2 cells, a human hepatoblastoma cell line. Phosphorylated in vitro by host protein kinase C or mitogen-activated protein kinase. N-acetylated in insect cells.

Its subcellular location is the host cytoplasm. The protein localises to the host nucleus. The protein resides in the host mitochondrion. Functionally, multifunctional protein that plays a role in silencing host antiviral defenses and promoting viral transcription. Does not seem to be essential for HBV infection. May be directly involved in development of cirrhosis and liver cancer (hepatocellular carcinoma). Most of cytosolic activities involve modulation of cytosolic calcium. The effect on apoptosis is controversial depending on the cell types in which the studies have been conducted. May induce apoptosis by localizing in mitochondria and causing loss of mitochondrial membrane potential. May also modulate apoptosis by binding host CFLAR, a key regulator of the death-inducing signaling complex (DISC). Promotes viral transcription by using the host E3 ubiquitin ligase DDB1 to target the SMC5-SMC6 complex to proteasomal degradation. This host complex would otherwise bind to viral episomal DNA, and prevents its transcription. Moderately stimulates transcription of many different viral and cellular transcription elements. Promoters and enhancers stimulated by HBx contain DNA binding sites for NF-kappa-B, AP-1, AP-2, c-EBP, ATF/CREB, or the calcium-activated factor NF-AT. The protein is Protein X of Orangutan hepatitis B virus (isolate Somad) (HBVoru).